A 374-amino-acid polypeptide reads, in one-letter code: Methylthioribose-1-phosphate isomerase (374 aa).

Asp-251 acts as the Proton donor in catalysis.

Belongs to the eIF-2B alpha/beta/delta subunits family. MtnA subfamily.

Its subcellular location is the cytoplasm. The protein resides in the nucleus. It catalyses the reaction 5-(methylsulfanyl)-alpha-D-ribose 1-phosphate = 5-(methylsulfanyl)-D-ribulose 1-phosphate. It participates in amino-acid biosynthesis; L-methionine biosynthesis via salvage pathway; L-methionine from S-methyl-5-thio-alpha-D-ribose 1-phosphate: step 1/6. In terms of biological role, catalyzes the interconversion of methylthioribose-1-phosphate (MTR-1-P) into methylthioribulose-1-phosphate (MTRu-1-P). The sequence is that of Methylthioribose-1-phosphate isomerase from Oryza sativa subsp. indica (Rice).